A 1104-amino-acid polypeptide reads, in one-letter code: MDAPFESGDSSATVVAEAVNNQFGGLSLKESNTNAPVLPSQTTSNHRVQNLVWKPKSYGTVSGSSSATEVGKTSAVSQIGSSGDTKVGLNLSKIFGGNLLEKFSVDKSTYCHAQIRATFYPKFENEKTDQEIRTRMIEMVSKGLATLEVSLKHSGSLFMYAGHKGGAYAKNSFGNIYTAVGVFVLSRMFREAWGTKAPKKEAEFNDFLEKNRMCISMELVTAVLGDHGQRPLDDYVVVTAVTELGNGKPQFYSTSEIISFCRKWRLPTNHVWLFSTRKSVTSFFAAFDALCEEGIATSVCRALDEVADISVPASKDHVKVQGEILEGLVARIVSSQSSRDMENVLRDHPPPPCDGANLDLGLSLREICAAHRSNEKQQMRALLRSVGPSFCPSDVEWFGDESHPKSADKSVITKFLQSQPADYSTSKLQEMVRLMKEKRLPAAFKCYHNFHRAEDISPDNLFYKLVVHVHSDSGFRRYHKEMRHMPSLWPLYRGFFVDINLFKSNKGRDLMALKSIDNASENDGRGEKDGLADDDANLMIKMKFLTYKLRTFLIRNGLSILFKDGAAAYKTYYLRQMKIWGTSDGKQKELCKMLDEWAAYIRRKCGNDQLSSSTYLSEAEPFLEQYAKRSPKNHILIGSAGNLVRTEDFLAIVDGDLDEEGDLVKKQGVTPATPEPAVKEAVQKDEGLIVFFPGIPGSAKSALCKELLNAPGGFGDDRPVHTLMGDLVKGKYWPKVADERRKKPQSIMLADKNAPNEDVWRQIEDMCRRTRASAVPIVADSEGTDTNPYSLDALAVFMFRVLQRVNHPGKLDKESSNAGYVLLMFYHLYEGKNRNEFESELIERFGSLIKMPLLKSDRTPLPDPVKSVLEEGIDLFNLHSRRHGRLESTKGTYAAEWTKWEKQLRDTLVANSEYLSSIQVPFESMVHQVREELKTIAKGDYKPPSSEKRKHGSIVFAAINLPATQVHSLLEKLAAANPTMRSFLEGKKKSIQEKLERSHVTLAHKRSHGVATVASYSQHLNREVPVELTELIYNDKMAALTAHVGSVDGETVVSKNEWPHVTLWTAEGVTAKEANTLPQLYLEGKASRLVIDPPVSISGPLEFF.

The active-site N6-AMP-lysine intermediate is Lys152.

The protein belongs to the TRL1 family. Mg(2+) serves as cofactor. Mainly expressed in proliferating cells and tissues such as root meristems, the vasculature of developing plantlets, flowers and elongating tissue.

The protein localises to the nucleus. It is found in the cytoplasm. It catalyses the reaction ATP + (ribonucleotide)n-3'-hydroxyl + 5'-phospho-(ribonucleotide)m = (ribonucleotide)n+m + AMP + diphosphate.. Its activity is regulated as follows. Requires the presence of NTP, preferentially ATP rather than dATP, UTP, CTP and GTP, respectively, to mediate ribonucleotide 5'-phosphorylation. Functionally, essential component of stress-response pathways entailing repair of RNA breaks with 2',3'-cyclic phosphate and 5'-OH ends. Tri-functional enzyme that repairs RNA breaks with 2',3'-cyclic-PO(4) and 5'-OH ends. The ligation activity requires three sequential enzymatic activities: opening of the 2'3'-cyclic phosphodiester bond of the 5' half-tRNA leaving a 2'-phosphomonoester (CPDase activity), phosphorylation of the 5' terminus of the 3' half-tRNA in the presence of ATP (kinase activity) and ligation of the two tRNA halves in an ATP-dependent reaction (ligase activity). Deficient in transferring AMP to pRNA(OH) to form AppRNA(OH) but proficient at sealing pre-adenylylated AppRNA(OH). CPDase and kinase reactions are almost insensitive to RNA length, whereas the ligase activity decreases with shorter RNA size. Can also splice DNA ended by a single 3'-terminal ribonucleoside 2',3'-cyclic-PO(4). Binds to mRNA, mature and immature. Exhibits tRNA ligase activity in vitro. Required for the splicing of precursor tRNA molecules containing introns. Can circularize an intron cleaved from a pre-tRNA by splicing endonuclease in vitro. Seems not involved in unfolded protein response (UPR) in the endoplasmic reticulum. Involved in auxin signaling and polar transport during organ morphogenesis. This chain is tRNA ligase 1, found in Arabidopsis thaliana (Mouse-ear cress).